The sequence spans 228 residues: NAD(P)H-quinone oxidoreductase subunit K, chloroplastic (228 aa).

4 residues coordinate [4Fe-4S] cluster: C43, C44, C108, and C139.

Belongs to the complex I 20 kDa subunit family. In terms of assembly, NDH is composed of at least 16 different subunits, 5 of which are encoded in the nucleus. Requires [4Fe-4S] cluster as cofactor.

Its subcellular location is the plastid. It is found in the chloroplast thylakoid membrane. The enzyme catalyses a plastoquinone + NADH + (n+1) H(+)(in) = a plastoquinol + NAD(+) + n H(+)(out). It carries out the reaction a plastoquinone + NADPH + (n+1) H(+)(in) = a plastoquinol + NADP(+) + n H(+)(out). Functionally, NDH shuttles electrons from NAD(P)H:plastoquinone, via FMN and iron-sulfur (Fe-S) centers, to quinones in the photosynthetic chain and possibly in a chloroplast respiratory chain. The immediate electron acceptor for the enzyme in this species is believed to be plastoquinone. Couples the redox reaction to proton translocation, and thus conserves the redox energy in a proton gradient. This Ceratophyllum demersum (Rigid hornwort) protein is NAD(P)H-quinone oxidoreductase subunit K, chloroplastic.